Consider the following 573-residue polypeptide: Probable D-xylulose kinase A (573 aa).

The substrate site is built by His97, Arg168, Asp284, and Asn285. ATP contacts are provided by residues Trp366, 471 to 472 (GG), and Asn475.

This sequence belongs to the FGGY kinase family.

The protein localises to the cytoplasm. The catalysed reaction is D-xylulose + ATP = D-xylulose 5-phosphate + ADP + H(+). Highly specific D-xylulose kinase which participates in the catabolism of xylose. Xylose is a major component of hemicelluloses such as xylan. Most fungi utilize D-xylose via three enzymatic reactions, xylose reductase (XR), xylitol dehydrogenase (XDH), and xylulokinase, to form xylulose 5-phosphate, which enters pentose phosphate pathway. In Neosartorya fischeri (strain ATCC 1020 / DSM 3700 / CBS 544.65 / FGSC A1164 / JCM 1740 / NRRL 181 / WB 181) (Aspergillus fischerianus), this protein is Probable D-xylulose kinase A (xkiA).